Consider the following 524-residue polypeptide: MGMRTKLSLAIFFFFLLALFSNLAFGKCKETEVEEEDPELVTCKHQCQQQQQYTEGDKRVCLQSCDRYHRMKQEREKQIQEETREKKEEESREREEEQQEQHEEQDENPYIFEEDKDFETRVETEGGRIRVLKKFTEKSKLLQGIENFRLAILEARAHTFVSPRHFDSEVVFFNIKGRAVLGLVSESETEKITLEPGDMIHIPAGTPLYIVNRDENDKLFLAMLHIPVSVSTPGKFEEFFAPGGRDPESVLSAFSWNVLQAALQTPKGKLENVFDQQNEGSIFRISREQVRALAPTKKSSWWPFGGESKPQFNIFSKRPTISNGYGRLTEVGPDDDEKSWLQRLNLMLTFTNITQRSMSTIHYNSHATKIALVIDGRGHLQISCPHMSSRSSHSKHDKSSPSYHRISSDLKPGMVFVVPPGHPFVTIASNKENLLMICFEVNARDNKKFTFAGKDNIVSSLDNVAKELAFNYPSEMVNGVFLLQRFLERKLIGRLYHLPHKDRKESFFFPFELPREERGRRADA.

The N-terminal stretch at 1–29 (MGMRTKLSLAIFFFFLLALFSNLAFGKCK) is a signal peptide. Over residues 73–102 (QEREKQIQEETREKKEEESREREEEQQEQH) the composition is skewed to basic and acidic residues. The interval 73–107 (QEREKQIQEETREKKEEESREREEEQQEQHEEQDE) is disordered. Cupin type-1 domains lie at 110–271 (YIFE…GKLE) and 312–478 (FNIF…EMVN). Positions 384 to 404 (CPHMSSRSSHSKHDKSSPSYH) are disordered.

As to expression, associated with the plasma membrane of several cell types engaged in sucrose transport, including the mesophyll cells of young sink leaves, the companion cells of mature phloem and the cells of developing cotyledons.

The protein resides in the membrane. Plays a role in sucrose transport. This Glycine max (Soybean) protein is Sucrose-binding protein (SBP).